Here is a 257-residue protein sequence, read N- to C-terminus: Type 2 phosphatidylinositol 4,5-bisphosphate 4-phosphatase (257 aa).

Residues 1–10 (MAADGVDERS) are compositionally biased toward basic and acidic residues. Positions 1–34 (MAADGVDERSPLLSASHSGSVTPTAPPYLQDSSP) are disordered. Polar residues predominate over residues 13 to 23 (LSASHSGSVTP). Threonine 22 is subject to Phosphothreonine. The residue at position 33 (serine 33) is a Phosphoserine. The active site involves cysteine 107. The CX5R motif motif lies at 107–113 (CKDTSRR). A run of 2 helical transmembrane segments spans residues 192–212 (CCAY…LTVG) and 227–247 (WAIA…WGAI).

The protein localises to the late endosome membrane. It is found in the lysosome membrane. The protein resides in the cytoplasmic vesicle. Its subcellular location is the phagosome membrane. It localises to the cell membrane. It catalyses the reaction a 1,2-diacyl-sn-glycero-3-phospho-(1D-myo-inositol-4,5-bisphosphate) + H2O = a 1,2-diacyl-sn-glycero-3-phospho-(1D-myo-inositol-5-phosphate) + phosphate. In terms of biological role, catalyzes the hydrolysis of phosphatidylinositol-4,5-bisphosphate (PtdIns-4,5-P2) to phosphatidylinositol-4-phosphate (PtdIns-4-P). Does not hydrolyze phosphatidylinositol 3,4,5-trisphosphate, phosphatidylinositol 3,4-bisphosphate, inositol 3,5-bisphosphate, inositol 3,4-bisphosphate, phosphatidylinositol 5-monophosphate, phosphatidylinositol 4-monophosphate and phosphatidylinositol 3-monophosphate. Negatively regulates the phagocytosis of large particles by reducing phagosomal phosphatidylinositol 4,5-bisphosphate accumulation during cup formation. This is Type 2 phosphatidylinositol 4,5-bisphosphate 4-phosphatase from Bos taurus (Bovine).